Reading from the N-terminus, the 80-residue chain is Translation initiation factor IF-1 (80 aa).

The 75-residue stretch at 6 to 80 (RKQEHEKERG…LTRGRIVYRL (75 aa)) folds into the S1-like domain.

This sequence belongs to the IF-1 family. Component of the 30S ribosomal translation pre-initiation complex which assembles on the 30S ribosome in the order IF-2 and IF-3, IF-1 and N-formylmethionyl-tRNA(fMet); mRNA recruitment can occur at any time during PIC assembly.

The protein localises to the cytoplasm. Its function is as follows. One of the essential components for the initiation of protein synthesis. Stabilizes the binding of IF-2 and IF-3 on the 30S subunit to which N-formylmethionyl-tRNA(fMet) subsequently binds. Helps modulate mRNA selection, yielding the 30S pre-initiation complex (PIC). Upon addition of the 50S ribosomal subunit IF-1, IF-2 and IF-3 are released leaving the mature 70S translation initiation complex. In Aquifex aeolicus (strain VF5), this protein is Translation initiation factor IF-1.